The sequence spans 33 residues: ATP synthase 27 kDa subunit, mitochondrial (33 aa).

The protein resides in the mitochondrion. Its subcellular location is the mitochondrion inner membrane. Its function is as follows. Mitochondrial membrane ATP synthase (F(1)F(0) ATP synthase or Complex V) produces ATP from ADP in the presence of a proton gradient across the membrane which is generated by electron transport complexes of the respiratory chain. F-type ATPases consist of two structural domains, F(1) - containing the extramembraneous catalytic core and F(0) - containing the membrane proton channel, linked together by a central stalk and a peripheral stalk. During catalysis, ATP synthesis in the catalytic domain of F(1) is coupled via a rotary mechanism of the central stalk subunits to proton translocation. Part of the complex F(0) domain. This is ATP synthase 27 kDa subunit, mitochondrial from Solanum tuberosum (Potato).